A 315-amino-acid chain; its full sequence is Homoserine kinase (315 aa).

96-106 provides a ligand contact to ATP; it reads PHSRGLGSSAA.

This sequence belongs to the GHMP kinase family. Homoserine kinase subfamily.

Its subcellular location is the cytoplasm. The catalysed reaction is L-homoserine + ATP = O-phospho-L-homoserine + ADP + H(+). The protein operates within amino-acid biosynthesis; L-threonine biosynthesis; L-threonine from L-aspartate: step 4/5. In terms of biological role, catalyzes the ATP-dependent phosphorylation of L-homoserine to L-homoserine phosphate. The protein is Homoserine kinase of Mycolicibacterium paratuberculosis (strain ATCC BAA-968 / K-10) (Mycobacterium paratuberculosis).